Reading from the N-terminus, the 151-residue chain is Sperm surface protein Sp17 (151 aa).

Disordered stretches follow at residues 56-115 and 127-151; these read DPAE…EKEE and GHIA…EENK. The span at 62–98 shows a compositional bias: basic and acidic residues; it reads SKVEDRFYNNHAFEEQEPPEKSDPKQEESQISGKEEE. In terms of domain architecture, IQ spans 114 to 143; that stretch reads EEVAAVKIQAAFRGHIAREEAKKMKTNSLQ.

Homodimer. May interact with ROPN1. In terms of tissue distribution, testis and sperm specific.

The protein localises to the membrane. In terms of biological role, sperm surface zona pellucida binding protein. Helps to bind spermatozoa to the zona pellucida with high affinity. Might function in binding zona pellucida and carbohydrates. The chain is Sperm surface protein Sp17 (SPA17) from Homo sapiens (Human).